Consider the following 261-residue polypeptide: Ribosomal RNA small subunit methyltransferase J (261 aa).

S-adenosyl-L-methionine contacts are provided by residues 101 to 102 (RD), 117 to 118 (ER), 153 to 154 (SS), and Asp-176.

It belongs to the methyltransferase superfamily. RsmJ family.

It is found in the cytoplasm. It carries out the reaction guanosine(1516) in 16S rRNA + S-adenosyl-L-methionine = N(2)-methylguanosine(1516) in 16S rRNA + S-adenosyl-L-homocysteine + H(+). Specifically methylates the guanosine in position 1516 of 16S rRNA. The chain is Ribosomal RNA small subunit methyltransferase J from Vibrio cholerae serotype O1 (strain ATCC 39315 / El Tor Inaba N16961).